We begin with the raw amino-acid sequence, 246 residues long: Probable septum site-determining protein MinC (246 aa).

Belongs to the MinC family. As to quaternary structure, interacts with MinD and FtsZ.

Cell division inhibitor that blocks the formation of polar Z ring septums. Rapidly oscillates between the poles of the cell to destabilize FtsZ filaments that have formed before they mature into polar Z rings. Prevents FtsZ polymerization. This is Probable septum site-determining protein MinC from Lachnospira eligens (strain ATCC 27750 / DSM 3376 / VPI C15-48 / C15-B4) (Eubacterium eligens).